We begin with the raw amino-acid sequence, 495 residues long: Leucine aminopeptidase 2 (495 aa).

The first 21 residues, 1–21 (MKSQLLSLAVAVSTISQGVVG), serve as a signal peptide directing secretion. The PA domain occupies 124 to 218 (PPANKIMAEL…EDGKNLASLV (95 aa)). N-linked (GlcNAc...) asparagine glycans are attached at residues Asn142 and Asn235. His259 and Asp271 together coordinate Zn(2+). Residue Asn272 is glycosylated (N-linked (GlcNAc...) asparagine). The active-site Proton acceptor is Glu303. Residues Glu304 and Asp332 each contribute to the Zn(2+) site. N-linked (GlcNAc...) asparagine glycosylation is present at Asn352. His430 is a binding site for Zn(2+).

This sequence belongs to the peptidase M28 family. M28A subfamily. Monomer. Zn(2+) serves as cofactor.

It is found in the secreted. Functionally, extracellular aminopeptidase that releases a wide variety of amino acids from natural peptides and contributes to pathogenicity. In Trichophyton equinum (Horse ringworm fungus), this protein is Leucine aminopeptidase 2 (LAP2).